Reading from the N-terminus, the 666-residue chain is DNA-directed RNA polymerase III subunit rpc3 (666 aa).

Disordered stretches follow at residues 130 to 153 (HEPH…VHSY) and 375 to 455 (SRLD…TESR). Polar residues predominate over residues 135-153 (NGNSNETNGATNGNGVHSY). Residues 593 to 614 (TYKAMSRCLQRLDVEKRRKANI) form a leucine-zipper region.

It belongs to the RNA polymerase beta chain family. As to quaternary structure, component of the RNA polymerase III (Pol III) complex consisting of 17 subunits.

The protein resides in the nucleus. Its function is as follows. DNA-dependent RNA polymerase catalyzes the transcription of DNA into RNA using the four ribonucleoside triphosphates as substrates. Specific core component of RNA polymerase III which synthesizes small RNAs, such as 5S rRNA and tRNAs. This Botryotinia fuckeliana (strain B05.10) (Noble rot fungus) protein is DNA-directed RNA polymerase III subunit rpc3 (rpc82).